Here is a 602-residue protein sequence, read N- to C-terminus: Na(+)/dicarboxylate cotransporter 3 (602 aa).

At 1–16 (MAALAAAAKKVWSARR) the chain is on the cytoplasmic side. The helical transmembrane segment at 17–37 (LLVLLFTPLALLPVVFALPPK) threads the bilayer. Topologically, residues 38-55 (EGRCLFVILLMAVYWCTE) are extracellular. A helical transmembrane segment spans residues 56–76 (ALPLSVTALLPIVLFPFMGIL). Residues 77-82 (PSNKVC) are Cytoplasmic-facing. The chain crosses the membrane as a helical span at residues 83–103 (PQYFLDTNFLFLSGLIMASAI). The Extracellular segment spans residues 104–137 (EEWNLHRRIALKILMLVGVQPARLILGMMVTTSF). The chain crosses the membrane as a helical span at residues 138-158 (LSMWLSNTASTAMMLPIANAI). Over 159 to 229 (LKSLFGQKEV…SRKEDEYRRN (71 aa)) the chain is Cytoplasmic. Residues 230-250 (IWKGFLISIPYSASIGGTATL) traverse the membrane as a helical segment. At 251–278 (TGTAPNLILLGQLKSFFPQCDVVNFGSW) the chain is on the extracellular side. Residues 279-299 (FIFAFPLMLLFLLAGWLWISF) form a helical membrane-spanning segment. Residues 300 to 336 (LYGGLSFRGWRKNKSEIRTNAEDRARAVIREEYQNLG) lie on the Cytoplasmic side of the membrane. Residues 337-357 (PIKFAEQAVFILFCMFAILLF) traverse the membrane as a helical segment. Residues 358-372 (TRDPKFIPGWASLFN) are Extracellular-facing. The chain crosses the membrane as a helical span at residues 373–393 (PGFLSDAVTGVAIVTILFFFP). The Cytoplasmic segment spans residues 394-422 (SQRPSLKWWFDFKAPNTETEPLLTWKKAQ). Residues 423 to 443 (ETVPWNIILLLGGGFAMAKGC) constitute an intramembrane region (helical). The Cytoplasmic segment spans residues 444-461 (EESGLSVWIGGQLHPLEN). The chain crosses the membrane as a helical span at residues 462–482 (VPPALAVLLITVVIAFFTEFA). Over 483 to 505 (SNTATIIIFLPVLAELAIRLRVH) the chain is Extracellular. The chain crosses the membrane as a helical span at residues 506–526 (PLYLMIPGTVGCSFAFMLPVS). Over 527 to 546 (TPPNSIAFASGHLLVKDMVR) the chain is Cytoplasmic. A helical transmembrane segment spans residues 547 to 567 (TGLLMNLMGVLLLSLAMNTWA). The Extracellular portion of the chain corresponds to 568 to 602 (QTIFQLGTFPDWADMYSVNVTALPPTLANDTFRTL). Residues asparagine 586 and asparagine 596 are each glycosylated (N-linked (GlcNAc...) asparagine).

The protein belongs to the SLC13A/DASS transporter (TC 2.A.47) family. NADC subfamily. Expression is highest in kidney. Detected in placenta, brain, liver and pancreas.

Its subcellular location is the cell membrane. It catalyses the reaction succinate(out) + 3 Na(+)(out) = succinate(in) + 3 Na(+)(in). It carries out the reaction 2-oxoglutarate(out) + 3 Na(+)(out) = 2-oxoglutarate(in) + 3 Na(+)(in). The enzyme catalyses N-acetyl-L-aspartate(out) + 3 Na(+)(out) = N-acetyl-L-aspartate(in) + 3 Na(+)(in). The catalysed reaction is glutarate(out) + 3 Na(+)(out) = glutarate(in) + 3 Na(+)(in). It catalyses the reaction fumarate(out) + 3 Na(+)(out) = fumarate(in) + 3 Na(+)(in). It carries out the reaction malate(out) + 3 Na(+)(out) = malate(in) + 3 Na(+)(in). The enzyme catalyses 2,2-dimethylsuccinate(out) + 3 Na(+)(out) = 2,2-dimethylsuccinate(in) + 3 Na(+)(in). The catalysed reaction is 2,3-dimethylsuccinate(out) + 3 Na(+)(out) = 2,3-dimethylsuccinate(in) + 3 Na(+)(in). It catalyses the reaction itaconate(out) + 3 Na(+)(out) = itaconate(in) + 3 Na(+)(in). Its activity is regulated as follows. Li(+) decreases succinate transport in the presence of Na(+). High-affinity sodium-dicarboxylate cotransporter that accepts a range of substrates with 4-6 carbon atoms, such as the citric acid cycle intermediates succinate and alpha-ketoglutarate (2-oxoglutarate), as well as other compounds including N-acetyl-L-aspartate. Transports the dicarboxylate into the cell with a probable stoichiometry of 3 Na(+) for 1 divalent dicarboxylate, rendering the process electrogenic. Can transport citrate in a Na(+)-dependent manner, recognizing the divalent form of citrate rather than the trivalent form which is normally found in blood. Imports itaconate in hepatocytes leading to activation of TFEB-dependent lysosomal biogenesis involved in antibacterial innate immune response. This chain is Na(+)/dicarboxylate cotransporter 3 (SLC13A3), found in Homo sapiens (Human).